We begin with the raw amino-acid sequence, 596 residues long: Putative terpenoid synthase 5 (596 aa).

The Mg(2+) site is built by aspartate 349, aspartate 353, asparagine 481, and aspartate 489. The DDXXD motif signature appears at 349-353 (DDTCD).

The protein belongs to the terpene synthase family. Tpsa subfamily. It depends on Mg(2+) as a cofactor. Mn(2+) serves as cofactor.

Its subcellular location is the cytoplasm. It participates in secondary metabolite biosynthesis; terpenoid biosynthesis. The chain is Putative terpenoid synthase 5 (TPS05) from Arabidopsis thaliana (Mouse-ear cress).